A 243-amino-acid chain; its full sequence is Segregation and condensation protein A (243 aa).

This sequence belongs to the ScpA family. As to quaternary structure, component of a cohesin-like complex composed of ScpA, ScpB and the Smc homodimer, in which ScpA and ScpB bind to the head domain of Smc. The presence of the three proteins is required for the association of the complex with DNA.

The protein localises to the cytoplasm. Functionally, participates in chromosomal partition during cell division. May act via the formation of a condensin-like complex containing Smc and ScpB that pull DNA away from mid-cell into both cell halves. This Halothermothrix orenii (strain H 168 / OCM 544 / DSM 9562) protein is Segregation and condensation protein A.